The chain runs to 368 residues: Endoglucanase (368 aa).

The N-terminal stretch at 1–21 is a signal peptide; sequence MNVLRSGLVTMLLLAAFSVQA. Residue E55 is the Proton donor of the active site. D116 functions as the Nucleophile in the catalytic mechanism.

The protein belongs to the glycosyl hydrolase 8 (cellulase D) family.

It localises to the secreted. The catalysed reaction is Endohydrolysis of (1-&gt;4)-beta-D-glucosidic linkages in cellulose, lichenin and cereal beta-D-glucans.. It participates in glycan metabolism; bacterial cellulose biosynthesis. Hydrolyzes carboxymethylcellulose. The chain is Endoglucanase (bcsZ) from Escherichia coli O157:H7.